A 251-amino-acid polypeptide reads, in one-letter code: DNA repair protein RecO (251 aa).

Belongs to the RecO family.

In terms of biological role, involved in DNA repair and RecF pathway recombination. This Albidiferax ferrireducens (strain ATCC BAA-621 / DSM 15236 / T118) (Rhodoferax ferrireducens) protein is DNA repair protein RecO.